The primary structure comprises 849 residues: G-type lectin S-receptor-like serine/threonine-protein kinase B120 (849 aa).

The signal sequence occupies residues Met1 to Ala25. One can recognise a Bulb-type lectin domain in the interval Ala26 to Phe153. Over Ala26–Lys438 the chain is Extracellular. N-linked (GlcNAc...) asparagine glycans are attached at residues Asn110, Asn191, Asn210, Asn230, Asn273, and Asn282. Residues Pro295–Gly332 enclose the EGF-like; atypical domain. 2 cysteine pairs are disulfide-bonded: Cys299/Cys311 and Cys305/Cys320. 3 N-linked (GlcNAc...) asparagine glycosylation sites follow: Asn333, Asn349, and Asn388. In terms of domain architecture, PAN spans Cys346 to Ala427. 2 disulfide bridges follow: Cys381–Cys402 and Cys385–Cys391. The helical transmembrane segment at Ile439–Leu459 threads the bilayer. Residues Trp460–Arg849 lie on the Cytoplasmic side of the membrane. Residues Phe529–Phe814 enclose the Protein kinase domain. Residues Leu535–Val543 and Lys557 contribute to the ATP site. Position 563 is a phosphoserine (Ser563). Positions Thr618–Ile635 are caM-binding. Asp654 acts as the Proton acceptor in catalysis. Residues Ser658 and Ser671 each carry the phosphoserine modification. Thr688 is modified (phosphothreonine). Phosphoserine is present on residues Ser732 and Ser837. Thr844 bears the Phosphothreonine mark.

Belongs to the protein kinase superfamily. Ser/Thr protein kinase family.

It localises to the cell membrane. It catalyses the reaction L-seryl-[protein] + ATP = O-phospho-L-seryl-[protein] + ADP + H(+). The enzyme catalyses L-threonyl-[protein] + ATP = O-phospho-L-threonyl-[protein] + ADP + H(+). The protein is G-type lectin S-receptor-like serine/threonine-protein kinase B120 (B120) of Arabidopsis thaliana (Mouse-ear cress).